We begin with the raw amino-acid sequence, 179 residues long: Warthog protein 3 (179 aa).

Residues 1-19 form the signal peptide; it reads MLYHVEMFTIILLFGFSLA. Asn52 and Asn147 each carry an N-linked (GlcNAc...) asparagine glycan.

In terms of tissue distribution, expressed in the trinucleate pharyngeal gland cell g1, seam cells and hypodermis.

It is found in the secreted. In terms of biological role, intercellular signal essential for a variety of patterning events during development. The protein is Warthog protein 3 (wrt-3) of Caenorhabditis elegans.